We begin with the raw amino-acid sequence, 105 residues long: Flowering-promoting factor 1-like protein 5 (105 aa).

Belongs to the FPF1 family.

In Oryza sativa subsp. japonica (Rice), this protein is Flowering-promoting factor 1-like protein 5.